Reading from the N-terminus, the 133-residue chain is FPRL1 inhibitory protein (133 aa).

An N-terminal signal peptide occupies residues 1 to 28 (MKKNITKTIIASTVIAAGLLTQTNDAKA).

It belongs to the CHIPS/FLIPr family.

The protein resides in the secreted. In terms of biological role, may be involved in countering the first line of host defense mechanisms. Impairs the leukocyte response to FPRL1 agonists by binding directly to host FPRL1. This Staphylococcus aureus (strain USA300) protein is FPRL1 inhibitory protein (flr).